Consider the following 479-residue polypeptide: CBL-interacting serine/threonine-protein kinase 10 (479 aa).

The Protein kinase domain occupies 12–266 (YDVGRLLGQG…IARIRESSWF (255 aa)). ATP-binding positions include 18–26 (LGQGTFAKV) and Lys41. Asp134 serves as the catalytic Proton acceptor. The activation loop stretch occupies residues 152–181 (DFGLSALADCKRQDGLLHTTCGTPAYVAPE). Ser156 is modified (phosphoserine). Thr170 is modified (phosphothreonine). A disordered region spans residues 286–323 (SVEAGTAGTNENGAGPSENGAGPSENGDRVTEENHTDE). The segment covering 288–300 (EAGTAGTNENGAG) has biased composition (low complexity). Over residues 311-323 (NGDRVTEENHTDE) the composition is skewed to basic and acidic residues. Residues 322–346 (DEPTNLNAFDLIALSAGFDLAGLFG) enclose the NAF domain. Residues 350 to 379 (KRESRFTSQKPASVIISKLEEVAQRLKLSI) form a PPI region. Positions 456 to 479 (SQQETEYQQQQQQEQQEQEEPLKF) are disordered. Residues 457–470 (QQETEYQQQQQQEQ) show a composition bias toward low complexity.

The protein belongs to the protein kinase superfamily. CAMK Ser/Thr protein kinase family. SNF1 subfamily. In terms of assembly, interacts with CBL4/SOS3. The cofactor is Mn(2+). Mostly expressed in roots.

The catalysed reaction is L-seryl-[protein] + ATP = O-phospho-L-seryl-[protein] + ADP + H(+). The enzyme catalyses L-threonyl-[protein] + ATP = O-phospho-L-threonyl-[protein] + ADP + H(+). CIPK serine-threonine protein kinases interact with CBL proteins. Binding of a CBL protein to the regulatory NAF domain of CIPK protein lead to the activation of the kinase in a calcium-dependent manner. This chain is CBL-interacting serine/threonine-protein kinase 10 (CIPK10), found in Arabidopsis thaliana (Mouse-ear cress).